We begin with the raw amino-acid sequence, 239 residues long: Probable inner membrane transporter protein TsaS (239 aa).

The next 4 helical transmembrane spans lie at 65–85, 128–148, 160–180, and 186–206; these read AIGA…WLMG, GLVG…IALL, ATVP…LFGA, and AHTF…VVLG.

It belongs to the 4-toluene sulfonate uptake permease (TSUP) (TC 2.A.102) family. In terms of assembly, part of a two-component transport system composed of TsaT and TsaS.

Its subcellular location is the cell inner membrane. Its function is as follows. Involved in the uptake of p-toluenesulphonate (TSA). The protein is Probable inner membrane transporter protein TsaS (tsaS) of Comamonas testosteroni (Pseudomonas testosteroni).